We begin with the raw amino-acid sequence, 81 residues long: Protein RALF-like 7 (81 aa).

An N-terminal signal peptide occupies residues 1-29 (MSARKKNRIHVFFVSIMIIISLVSGFGEG). 2 cysteine pairs are disulfide-bonded: cysteine 46–cysteine 54 and cysteine 66–cysteine 72.

It belongs to the plant rapid alkalinization factor (RALF) family.

It localises to the secreted. In terms of biological role, cell signaling peptide that may regulate plant stress, growth, and development. Mediates a rapid alkalinization of extracellular space by mediating a transient increase in the cytoplasmic Ca(2+) concentration leading to a calcium-dependent signaling events through a cell surface receptor and a concomitant activation of some intracellular mitogen-activated protein kinases. The chain is Protein RALF-like 7 (RALFL7) from Arabidopsis thaliana (Mouse-ear cress).